A 55-amino-acid polypeptide reads, in one-letter code: MAKGIREKIRLVSSAGTGHFYTTDKNKRNMPGKFEIKKFDPVVRQHVMYKEAKIK.

This sequence belongs to the bacterial ribosomal protein bL33 family.

The sequence is that of Large ribosomal subunit protein bL33 from Vibrio atlanticus (strain LGP32) (Vibrio splendidus (strain Mel32)).